The following is a 497-amino-acid chain: Squalene monooxygenase (497 aa).

FAD is bound by residues Val29–Val30, Glu49–Arg50, Arg57, Arg159, Val175, Asp336, and Met349. 2 helical membrane passes run Phe434–Leu454 and Leu467–Phe487.

Belongs to the squalene monooxygenase family. It depends on FAD as a cofactor.

Its subcellular location is the microsome membrane. The protein localises to the endoplasmic reticulum membrane. The enzyme catalyses squalene + reduced [NADPH--hemoprotein reductase] + O2 = (S)-2,3-epoxysqualene + oxidized [NADPH--hemoprotein reductase] + H2O + H(+). Its pathway is terpene metabolism; lanosterol biosynthesis; lanosterol from farnesyl diphosphate: step 2/3. Catalyzes the stereospecific oxidation of squalene to (S)-2,3-epoxysqualene, and is considered to be a rate-limiting enzyme in steroid biosynthesis. The protein is Squalene monooxygenase (ERG1) of Eremothecium gossypii (strain ATCC 10895 / CBS 109.51 / FGSC 9923 / NRRL Y-1056) (Yeast).